The primary structure comprises 491 residues: UDP-GalNAc:beta-1,3-N-acetylgalactosaminyltransferase 2 (491 aa).

The Cytoplasmic segment spans residues 1–2 (MR). The helical; Signal-anchor for type II membrane protein transmembrane segment at 3–23 (SAAAALSVCVLAVLLHWICWT) threads the bilayer. The Lumenal portion of the chain corresponds to 24 to 491 (DRSAELLGFR…NKCGDPCGCS (468 aa)). N167 and N230 each carry an N-linked (GlcNAc...) asparagine glycan.

This sequence belongs to the glycosyltransferase 31 family.

It localises to the golgi apparatus membrane. The protein resides in the endoplasmic reticulum. The catalysed reaction is 3-O-(N-acetyl-beta-D-glucosaminyl-(1-&gt;4)-alpha-D-mannosyl)-L-threonyl-[protein] + UDP-N-acetyl-alpha-D-galactosamine = 3-O-[beta-D-GalNAc-(1-&gt;3)-beta-D-GlcNAc-(1-&gt;4)-alpha-D-Man]-L-Thr-[protein] + UDP + H(+). The protein operates within protein modification; protein glycosylation. In terms of biological role, beta-1,3-N-acetylgalactosaminyltransferase that synthesizes a unique carbohydrate structure, GalNAc-beta-1-3GlcNAc, on N- and O-glycans. Has no galactose nor galactosaminyl transferase activity toward any acceptor substrate. Involved in alpha-dystroglycan (dag1) glycosylation. In Danio rerio (Zebrafish), this protein is UDP-GalNAc:beta-1,3-N-acetylgalactosaminyltransferase 2 (b3galnt2).